A 230-amino-acid polypeptide reads, in one-letter code: MKKKKALPSLLYLVFIVLLPWGVSFSFNKCLELWIKNWWNTRQSETLLPYIQEKRILERFIELEELSLLDEMIKEKLKTHAQKPPIGIHKEIIQLVKMDNEDHLHIILHFSTNIICLAILSGFFFLSKEELVILNSWVQEFFYNLNDSIKAFFILLVTDFFVGFHSTRGWELVIRWVYNDLGWAPNELIFTIFVCSFPVILDTCLKFWVFFCLNRLSPSLVVIYHSISEA.

The next 4 helical transmembrane spans lie at 7 to 27 (LPSL…SFSF), 106 to 126 (IILH…FFFL), 145 to 165 (LNDS…VGFH), and 181 to 201 (LGWA…PVIL).

This sequence belongs to the CemA family.

It localises to the plastid. The protein resides in the chloroplast inner membrane. It catalyses the reaction K(+)(in) + H(+)(out) = K(+)(out) + H(+)(in). In terms of biological role, contributes to K(+)/H(+) antiport activity by supporting proton efflux to control proton extrusion and homeostasis in chloroplasts in a light-dependent manner to modulate photosynthesis. Prevents excessive induction of non-photochemical quenching (NPQ) under continuous-light conditions. Indirectly promotes efficient inorganic carbon uptake into chloroplasts. The sequence is that of Potassium/proton antiporter CemA from Lolium perenne (Perennial ryegrass).